Consider the following 119-residue polypeptide: Ribosome-binding factor A (119 aa).

It belongs to the RbfA family. Monomer. Binds 30S ribosomal subunits, but not 50S ribosomal subunits or 70S ribosomes.

Its subcellular location is the cytoplasm. One of several proteins that assist in the late maturation steps of the functional core of the 30S ribosomal subunit. Associates with free 30S ribosomal subunits (but not with 30S subunits that are part of 70S ribosomes or polysomes). Required for efficient processing of 16S rRNA. May interact with the 5'-terminal helix region of 16S rRNA. The chain is Ribosome-binding factor A from Chlorobium limicola (strain DSM 245 / NBRC 103803 / 6330).